Consider the following 669-residue polypeptide: NAD-dependent malic enzyme, mitochondrial (669 aa).

Polar residues predominate over residues 33 to 43; the sequence is IQQSRLYSSNT. The segment at 33 to 68 is disordered; that stretch reads IQQSRLYSSNTRSHKATTTRENTFQKPYSDEEVTKT. Arg-142 lines the fumarate pocket. Tyr-187 serves as the catalytic Proton donor. Lys-259 (proton acceptor) is an active-site residue. A divalent metal cation contacts are provided by Glu-330, Asp-331, and Asp-354. Positions 387 and 390 each coordinate NAD(+). (S)-malate-binding residues include Asn-499 and Asn-539.

This sequence belongs to the malic enzymes family. Mg(2+) is required as a cofactor. The cofactor is Mn(2+).

It localises to the mitochondrion matrix. The enzyme catalyses (S)-malate + NAD(+) = pyruvate + CO2 + NADH. The catalysed reaction is oxaloacetate + H(+) = pyruvate + CO2. In terms of biological role, NAD-dependent mitochondrial malic enzyme that catalyzes the oxidative decarboxylation of malate to pyruvate. The protein is NAD-dependent malic enzyme, mitochondrial (MAE1) of Saccharomyces cerevisiae (strain ATCC 204508 / S288c) (Baker's yeast).